The sequence spans 226 residues: ATP synthase subunit a (226 aa).

The next 6 helical transmembrane spans lie at 18–38 (FITGFFVVLTAVLMFLISLGA), 79–99 (LAGTIALYVFFSNMIGIIPGF), 105–125 (SWSFTLVLALIVFFYYHFEGI), 134–154 (FAHFAGPVKWLAPFMFPIEII), 179–199 (LIMLLLVPWAVPVAPFMVLFF), and 201–221 (GILQAFVFMILTYVYLAGAVL).

The protein belongs to the ATPase A chain family. In terms of assembly, F-type ATPases have 2 components, CF(1) - the catalytic core - and CF(0) - the membrane proton channel. CF(1) has five subunits: alpha(3), beta(3), gamma(1), delta(1), epsilon(1). CF(0) has three main subunits: a(1), b(2) and c(9-12). The alpha and beta chains form an alternating ring which encloses part of the gamma chain. CF(1) is attached to CF(0) by a central stalk formed by the gamma and epsilon chains, while a peripheral stalk is formed by the delta and b chains.

The protein localises to the cell inner membrane. Its function is as follows. Key component of the proton channel; it plays a direct role in the translocation of protons across the membrane. This is ATP synthase subunit a from Helicobacter pylori (strain HPAG1).